The following is a 307-amino-acid chain: Ribonuclease Z (307 aa).

Positions 63, 65, 67, 68, 141, 212, and 270 each coordinate Zn(2+). The active-site Proton acceptor is the Asp67.

It belongs to the RNase Z family. Homodimer. Zn(2+) is required as a cofactor.

It carries out the reaction Endonucleolytic cleavage of RNA, removing extra 3' nucleotides from tRNA precursor, generating 3' termini of tRNAs. A 3'-hydroxy group is left at the tRNA terminus and a 5'-phosphoryl group is left at the trailer molecule.. Its function is as follows. Zinc phosphodiesterase, which displays some tRNA 3'-processing endonuclease activity. Probably involved in tRNA maturation, by removing a 3'-trailer from precursor tRNA. The sequence is that of Ribonuclease Z from Bacillus cereus (strain B4264).